Reading from the N-terminus, the 581-residue chain is Estrogen receptor (581 aa).

Positions 1 to 144 are modulating; that stretch reads MYPEDSRVSG…GFEMAKEMRF (144 aa). Disordered stretches follow at residues 45–66 and 99–123; these read APLDAHGPPSDGSLQSLGSGPN and RSSVPSSQHSVSREDQCGTSDDSYS. Polar residues predominate over residues 56-66; the sequence is GSLQSLGSGPN. Residues 142–217 constitute a DNA-binding region (nuclear receptor); sequence MRFCAVCSDY…VGMMKGGVRK (76 aa). 2 NR C4-type zinc fingers span residues 145–165 and 181–200; these read CAVCSDYASGYHYGVWSCEGC and CPATNQCTIDRNRRKSCQAC. The hinge stretch occupies residues 211 to 272; that stretch reads MKGGVRKDRG…GGGKSSVISM (62 aa). Positions 216–246 are enriched in basic and acidic residues; the sequence is RKDRGRVLRRDKRRTGTSDRDKASKGLEHRT. The segment at 216–269 is disordered; sequence RKDRGRVLRRDKRRTGTSDRDKASKGLEHRTAPPQDRRKHISSSAGGGGGKSSV. The region spanning 273–509 is the NR LBD domain; the sequence is PPDQVLLLLR…DLLLEMLDAH (237 aa). Over residues 514 to 528 the composition is skewed to basic and acidic residues; the sequence is PDRPAETWSQADREP. The tract at residues 514 to 581 is disordered; the sequence is PDRPAETWSQ…VHPHPMKPTE (68 aa). Basic residues predominate over residues 572 to 581; that stretch reads VHPHPMKPTE.

This sequence belongs to the nuclear hormone receptor family. NR3 subfamily. Binds DNA as a homodimer. Can form a heterodimer with ER-beta.

It localises to the nucleus. Its function is as follows. The steroid hormones and their receptors are involved in the regulation of eukaryotic gene expression and affect cellular proliferation and differentiation in target tissues. The sequence is that of Estrogen receptor (esr1) from Sparus aurata (Gilthead sea bream).